The chain runs to 411 residues: Alpha-galactosidase (411 aa).

An N-terminal signal peptide occupies residues 1–24; the sequence is MATHYSIIGGMIIVVLLMIIGSEG. Residues 25–47 constitute a propeptide that is removed on maturation; it reads GRLLEKKNRTSAEAEHYNVRRYL. Residue asparagine 32 is glycosylated (N-linked (GlcNAc...) asparagine). The cysteines at positions 68 and 100 are disulfide-linked. The N-linked (GlcNAc...) asparagine glycan is linked to asparagine 145. Cysteine 148 and cysteine 179 are oxidised to a cystine. The active-site Nucleophile is the aspartate 177. 210–214 is a substrate binding site; sequence EWGWE. Aspartate 232 (proton donor) is an active-site residue. Asparagine 352 carries an N-linked (GlcNAc...) asparagine glycan.

It belongs to the glycosyl hydrolase 27 family.

The enzyme catalyses Hydrolysis of terminal, non-reducing alpha-D-galactose residues in alpha-D-galactosides, including galactose oligosaccharides, galactomannans and galactolipids.. In terms of biological role, involved in the hydrolysis of the galactomannan, it splits alpha-linked galactose moieties. It is particularly suitable for the hydrolysis of guar gum to a gum with improved gelling properties. Preferentially cleaves alpha-1,6 glycoside linkages. The polypeptide is Alpha-galactosidase (Cyamopsis tetragonoloba (Guar)).